The chain runs to 728 residues: Microtubule-associated protein VP5 (728 aa).

The protein belongs to the reoviridae microtubule-associated protein family.

It localises to the virion. It is found in the host cytoplasm. The protein localises to the host cytoskeleton. In terms of biological role, minor inner capsid component. Displays NTPase and RNA 5'-triphosphatase (RTPase) activities. May function as a cofactor of polymerase. Associates with microtubules and plays a role in the formation, structural organization and morphology of viral inclusions, where the assembly of cores and the replication of viral RNA occur. In Aquareovirus C (isolate Golden shiner/USA/GSRV/1977) (AQRV-C), this protein is Microtubule-associated protein VP5 (S5).